Here is a 233-residue protein sequence, read N- to C-terminus: Purine nucleoside phosphorylase DeoD-type (233 aa).

Residue histidine 4 coordinates a purine D-ribonucleoside. Phosphate contacts are provided by residues glycine 20, arginine 24, arginine 43, and 87-90 (RVGT). A purine D-ribonucleoside is bound by residues 178–180 (EME) and 202–203 (SD). Aspartate 203 (proton donor) is an active-site residue.

The protein belongs to the PNP/UDP phosphorylase family. In terms of assembly, homohexamer; trimer of homodimers.

The enzyme catalyses a purine D-ribonucleoside + phosphate = a purine nucleobase + alpha-D-ribose 1-phosphate. The catalysed reaction is a purine 2'-deoxy-D-ribonucleoside + phosphate = a purine nucleobase + 2-deoxy-alpha-D-ribose 1-phosphate. Its function is as follows. Catalyzes the reversible phosphorolytic breakdown of the N-glycosidic bond in the beta-(deoxy)ribonucleoside molecules, with the formation of the corresponding free purine bases and pentose-1-phosphate. The sequence is that of Purine nucleoside phosphorylase DeoD-type from Listeria monocytogenes serotype 4b (strain CLIP80459).